The sequence spans 291 residues: Porphobilinogen deaminase (291 aa).

Position 238 is an S-(dipyrrolylmethanemethyl)cysteine (cysteine 238).

The protein belongs to the HMBS family. Monomer. Dipyrromethane is required as a cofactor.

The catalysed reaction is 4 porphobilinogen + H2O = hydroxymethylbilane + 4 NH4(+). Its pathway is porphyrin-containing compound metabolism; protoporphyrin-IX biosynthesis; coproporphyrinogen-III from 5-aminolevulinate: step 2/4. Tetrapolymerization of the monopyrrole PBG into the hydroxymethylbilane pre-uroporphyrinogen in several discrete steps. The chain is Porphobilinogen deaminase from Clostridium beijerinckii (strain ATCC 51743 / NCIMB 8052) (Clostridium acetobutylicum).